Reading from the N-terminus, the 263-residue chain is Acyl-[acyl-carrier-protein]--UDP-N-acetylglucosamine O-acyltransferase (263 aa).

Belongs to the transferase hexapeptide repeat family. LpxA subfamily. As to quaternary structure, homotrimer.

The protein resides in the cytoplasm. The enzyme catalyses a (3R)-hydroxyacyl-[ACP] + UDP-N-acetyl-alpha-D-glucosamine = a UDP-3-O-[(3R)-3-hydroxyacyl]-N-acetyl-alpha-D-glucosamine + holo-[ACP]. It functions in the pathway glycolipid biosynthesis; lipid IV(A) biosynthesis; lipid IV(A) from (3R)-3-hydroxytetradecanoyl-[acyl-carrier-protein] and UDP-N-acetyl-alpha-D-glucosamine: step 1/6. Its function is as follows. Involved in the biosynthesis of lipid A, a phosphorylated glycolipid that anchors the lipopolysaccharide to the outer membrane of the cell. This is Acyl-[acyl-carrier-protein]--UDP-N-acetylglucosamine O-acyltransferase from Xanthomonas axonopodis pv. citri (strain 306).